Reading from the N-terminus, the 781-residue chain is Penicillin-binding protein 1B (781 aa).

Residues 151 to 322 (FRLAPKLIAM…SLYNPWRNPQ (172 aa)) form a transglycosylase region. Glu-188 (proton donor; for transglycosylase activity) is an active-site residue. A transpeptidase region spans residues 415–702 (SQLQLKMKNP…ALQIYKDYLN (288 aa)). Ser-466 (acyl-ester intermediate; for transpeptidase activity) is an active-site residue. Residues 749–768 (ETSSPSLTPTTETETPPQES) are compositionally biased toward low complexity. A disordered region spans residues 749 to 781 (ETSSPSLTPTTETETPPQESLWDVLDNPNPPAQ).

It in the N-terminal section; belongs to the glycosyltransferase 51 family. The protein in the C-terminal section; belongs to the transpeptidase family.

It is found in the cell inner membrane. The enzyme catalyses [GlcNAc-(1-&gt;4)-Mur2Ac(oyl-L-Ala-gamma-D-Glu-L-Lys-D-Ala-D-Ala)](n)-di-trans,octa-cis-undecaprenyl diphosphate + beta-D-GlcNAc-(1-&gt;4)-Mur2Ac(oyl-L-Ala-gamma-D-Glu-L-Lys-D-Ala-D-Ala)-di-trans,octa-cis-undecaprenyl diphosphate = [GlcNAc-(1-&gt;4)-Mur2Ac(oyl-L-Ala-gamma-D-Glu-L-Lys-D-Ala-D-Ala)](n+1)-di-trans,octa-cis-undecaprenyl diphosphate + di-trans,octa-cis-undecaprenyl diphosphate + H(+). It catalyses the reaction Preferential cleavage: (Ac)2-L-Lys-D-Ala-|-D-Ala. Also transpeptidation of peptidyl-alanyl moieties that are N-acyl substituents of D-alanine.. It participates in cell wall biogenesis; peptidoglycan biosynthesis. In terms of biological role, cell wall formation. Synthesis of cross-linked peptidoglycan from the lipid intermediates. The enzyme has a penicillin-insensitive transglycosylase N-terminal domain (formation of linear glycan strands) and a penicillin-sensitive transpeptidase C-terminal domain (cross-linking of the peptide subunits). The chain is Penicillin-binding protein 1B (mrcB) from Haemophilus influenzae (strain ATCC 51907 / DSM 11121 / KW20 / Rd).